The chain runs to 433 residues: Inward rectifier potassium channel 18 (433 aa).

At Met1 to Asp77 the chain is on the cytoplasmic side. The helical transmembrane segment at Ile78–Val104 threads the bilayer. The Extracellular portion of the chain corresponds to Ile105–Gly129. The helical; Pore-forming intramembrane region spans Phe130–Tyr146. A Selectivity filter motif is present at residues Thr143–Leu148. The Extracellular segment spans residues Gly147 to Cys155. The helical transmembrane segment at Leu156–Lys183 threads the bilayer. The Cytoplasmic segment spans residues Met184–Ile433. A disordered region spans residues Asp387 to Ile433. A compositionally biased stretch (basic and acidic residues) spans Gln396–Arg414.

This sequence belongs to the inward rectifier-type potassium channel (TC 1.A.2.1) family. KCNJ12 subfamily. In terms of assembly, can form heteromeric channels with Kir2.1/KCNJ2. Can form heteromeric channels with Kir2.2/KCNJ12. Post-translationally, probably phosphorylated by PKC; decreases single-channel open probability. As to expression, specifically expressed in skeletal muscle.

Its subcellular location is the cell membrane. The protein localises to the endoplasmic reticulum. It carries out the reaction K(+)(in) = K(+)(out). Its function is as follows. Inward rectifier potassium channels are characterized by a greater tendency to allow potassium to flow into the cell rather than out of it. Their voltage dependence is regulated by the concentration of extracellular potassium; as external potassium is raised, the voltage range of the channel opening shifts to more positive voltages. The inward rectification is mainly due to the blockage of outward current by internal magnesium. The sequence is that of Inward rectifier potassium channel 18 (KCNJ18) from Homo sapiens (Human).